A 792-amino-acid chain; its full sequence is DEAD-box ATP-dependent RNA helicase 40 (792 aa).

The span at 1–16 shows a compositional bias: low complexity; it reads MSAGTAPAAPRYAPDD. Disordered regions lie at residues 1-25 and 44-118; these read MSAG…PWRG and TQYE…PLPA. In terms of domain architecture, WW spans 17–51; the sequence is PSLPKPWRGLVDGTTGYLYYWNPETNITQYEKPLP. Pro residues predominate over residues 52 to 68; it reads PEDQLPPPPPLPPPPPR. Composition is skewed to basic and acidic residues over residues 70–80 and 88–108; these read GRGDRDRDRRD and PRRD…DHRS. Residues 150–178 carry the Q motif motif; that stretch reads TSFETGGFPPEILKEIQRAGFSSPTPIQA. Residues 181–355 form the Helicase ATP-binding domain; the sequence is WPIALQCQDV…EDLLVHPVQV (175 aa). 194-201 is a binding site for ATP; it reads AKTGSGKT. Positions 303-306 match the DEAD box motif; sequence DEAD. A Helicase C-terminal domain is found at 384-528; the sequence is RLEQILRSQD…RVPRDLADMA (145 aa). The disordered stretch occupies residues 523–792; it reads DLADMASRGG…NATVQNGGDN (270 aa). Composition is skewed to basic and acidic residues over residues 543–560 and 572–588; these read TRSD…RYGG and DSSR…DGRS. Composition is skewed to basic residues over residues 589–599 and 609–654; these read RRSGRGRSRSR and RSPK…RRHE. Over residues 668–708 the composition is skewed to basic and acidic residues; it reads GHGERKRTPEADPSRNHTNHSDPKDDRHPEDGKVGKVDLDR. Residues 725–739 are compositionally biased toward polar residues; that stretch reads GKTSRSVSPGNQVEG. Residues 764-777 show a composition bias toward acidic residues; that stretch reads DEEEGMIDEDGEIA.

It belongs to the DEAD box helicase family. DDX5/DBP2 subfamily.

Its subcellular location is the nucleus. The catalysed reaction is ATP + H2O = ADP + phosphate + H(+). Functionally, ATP-dependent RNA helicase involved nonsense-mediated mRNA decay and ribosome biogenesis through rRNA processing. In Oryza sativa subsp. japonica (Rice), this protein is DEAD-box ATP-dependent RNA helicase 40.